We begin with the raw amino-acid sequence, 197 residues long: Negative modulator of initiation of replication (197 aa).

3 interaction with DNA regions span residues 100 to 101 (AV), 129 to 133 (RTRVY), and 163 to 169 (NTNSGRK).

Belongs to the SeqA family. In terms of assembly, homodimer. Polymerizes to form helical filaments.

Its subcellular location is the cytoplasm. Negative regulator of replication initiation, which contributes to regulation of DNA replication and ensures that replication initiation occurs exactly once per chromosome per cell cycle. Binds to pairs of hemimethylated GATC sequences in the oriC region, thus preventing assembly of replication proteins and re-initiation at newly replicated origins. Repression is relieved when the region becomes fully methylated. This Haemophilus influenzae (strain ATCC 51907 / DSM 11121 / KW20 / Rd) protein is Negative modulator of initiation of replication.